Consider the following 409-residue polypeptide: tRNA-specific 2-thiouridylase MnmA (409 aa).

Residues 20-27 (AMSGGVDS) and L46 each bind ATP. Residue C114 is the Nucleophile of the active site. C114 and C210 are joined by a disulfide. G138 contacts ATP. The interaction with tRNA stretch occupies residues 160–162 (RDQ). C210 acts as the Cysteine persulfide intermediate in catalysis.

Belongs to the MnmA/TRMU family.

The protein localises to the cytoplasm. It catalyses the reaction S-sulfanyl-L-cysteinyl-[protein] + uridine(34) in tRNA + AH2 + ATP = 2-thiouridine(34) in tRNA + L-cysteinyl-[protein] + A + AMP + diphosphate + H(+). Catalyzes the 2-thiolation of uridine at the wobble position (U34) of tRNA, leading to the formation of s(2)U34. This is tRNA-specific 2-thiouridylase MnmA from Bartonella henselae (strain ATCC 49882 / DSM 28221 / CCUG 30454 / Houston 1) (Rochalimaea henselae).